We begin with the raw amino-acid sequence, 357 residues long: NADH-quinone oxidoreductase subunit H (357 aa).

A run of 8 helical transmembrane segments spans residues 26–46 (LVKIIAVVAPLMGAVAYLTLW), 92–112 (ALFVIAPIMTIMPALAAWAVI), 127–147 (LLFVMAITSLEVYGVIVAGWA), 164–184 (MISYEIAMGFVLVIILMVTGS), 203–223 (GLTFLSWNWLPLLPMFFIYII), 259–279 (FFLAEYANMWLISIMATLMFL), 294–314 (VPGWIWLGLKTLMVVTMFIWF), and 329–349 (LGWKVFIPLTLVYLLIVAIWM).

Belongs to the complex I subunit 1 family. In terms of assembly, NDH-1 is composed of 14 different subunits. Subunits NuoA, H, J, K, L, M, N constitute the membrane sector of the complex.

It localises to the cell inner membrane. The enzyme catalyses a quinone + NADH + 5 H(+)(in) = a quinol + NAD(+) + 4 H(+)(out). Functionally, NDH-1 shuttles electrons from NADH, via FMN and iron-sulfur (Fe-S) centers, to quinones in the respiratory chain. The immediate electron acceptor for the enzyme in this species is believed to be ubiquinone. Couples the redox reaction to proton translocation (for every two electrons transferred, four hydrogen ions are translocated across the cytoplasmic membrane), and thus conserves the redox energy in a proton gradient. This subunit may bind ubiquinone. The chain is NADH-quinone oxidoreductase subunit H from Janthinobacterium sp. (strain Marseille) (Minibacterium massiliensis).